The primary structure comprises 478 residues: Cysteine--tRNA ligase (478 aa).

A Zn(2+)-binding site is contributed by Cys29. The 'HIGH' region motif lies at 31–41; it reads VTVYDYCHLGH. Residues Cys213, His238, and Glu242 each coordinate Zn(2+). Residues 270–274 carry the 'KMSKS' region motif; the sequence is KMSKS. Residue Lys273 coordinates ATP.

The protein belongs to the class-I aminoacyl-tRNA synthetase family. In terms of assembly, monomer. Zn(2+) serves as cofactor.

The protein localises to the cytoplasm. The catalysed reaction is tRNA(Cys) + L-cysteine + ATP = L-cysteinyl-tRNA(Cys) + AMP + diphosphate. This chain is Cysteine--tRNA ligase, found in Synechococcus sp. (strain ATCC 27144 / PCC 6301 / SAUG 1402/1) (Anacystis nidulans).